The sequence spans 354 residues: Nicotinate-nucleotide--dimethylbenzimidazole phosphoribosyltransferase (354 aa).

Glutamate 322 (proton acceptor) is an active-site residue.

The protein belongs to the CobT family.

It carries out the reaction 5,6-dimethylbenzimidazole + nicotinate beta-D-ribonucleotide = alpha-ribazole 5'-phosphate + nicotinate + H(+). The protein operates within nucleoside biosynthesis; alpha-ribazole biosynthesis; alpha-ribazole from 5,6-dimethylbenzimidazole: step 1/2. Its function is as follows. Catalyzes the synthesis of alpha-ribazole-5'-phosphate from nicotinate mononucleotide (NAMN) and 5,6-dimethylbenzimidazole (DMB). In Solidesulfovibrio magneticus (strain ATCC 700980 / DSM 13731 / RS-1) (Desulfovibrio magneticus), this protein is Nicotinate-nucleotide--dimethylbenzimidazole phosphoribosyltransferase.